Consider the following 191-residue polypeptide: Fe/S biogenesis protein NfuA (191 aa).

[4Fe-4S] cluster contacts are provided by cysteine 149 and cysteine 152.

This sequence belongs to the NfuA family. As to quaternary structure, homodimer. It depends on [4Fe-4S] cluster as a cofactor.

Functionally, involved in iron-sulfur cluster biogenesis. Binds a 4Fe-4S cluster, can transfer this cluster to apoproteins, and thereby intervenes in the maturation of Fe/S proteins. Could also act as a scaffold/chaperone for damaged Fe/S proteins. The sequence is that of Fe/S biogenesis protein NfuA from Pectobacterium carotovorum subsp. carotovorum (strain PC1).